The sequence spans 595 residues: MNDLIKHKLELLPSNPGCYLHKDKFGNIIYVGKAKNLKNRVRSYFRGSHDTKTELLVSEIADFEFIVTESNIEALLLEINLIQENMPKFNIRLKDGKSYPFIKITKELYPRLLITRQVKKDGGLYFGPYPDAGAANEIKKLLDRIFPFKKCKNPANKVCFYYHIGQCKAHTICHTTEAYWQGLVEDVKNFLNGHDDKIVNQLKAKMKDMSDQMEFERAAEYRDLIEAVSTLRTKQRVIRQDMQDRDIFGYYVDKGWMCVQVFFVRQGKLIQRDVNMFPYYNDAEEDFLTYMGQFYLDSRHLKPKEIFIPGDIDQESVEALVGDEVKVFKPQRGEKKQLVNLATKNARVSLTQKFDLLEKDIAKTQGAIENLGKLMGIPTPVRIESFDNSNIMGTSPVSAMVVFENGKPNKKEYRKYKIKTVEGPDDYASMREVIRRRYSRVKRDGLTPPDLIIIDGGQGQVNVAKDVLRNELNLSIPVAGLQKNDKHQTNELLFGDPLRVIDLPRQSEEFFLLHRIQDEVHRFAITFHRQVRSKNSFSSKLDGVEGLGPKRKQKLLKNFKSMTAIQQASVEDIQALGIPEKVAQALLDKLSQDSH.

The 78-residue stretch at 14–91 (SNPGCYLHKD…IQENMPKFNI (78 aa)) folds into the GIY-YIG domain. Residues 196 to 231 (DKIVNQLKAKMKDMSDQMEFERAAEYRDLIEAVSTL) form the UVR domain.

Belongs to the UvrC family. In terms of assembly, interacts with UvrB in an incision complex.

The protein resides in the cytoplasm. Its function is as follows. The UvrABC repair system catalyzes the recognition and processing of DNA lesions. UvrC both incises the 5' and 3' sides of the lesion. The N-terminal half is responsible for the 3' incision and the C-terminal half is responsible for the 5' incision. This Streptococcus thermophilus (strain CNRZ 1066) protein is UvrABC system protein C.